The following is a 676-amino-acid chain: MAAAKVALTKRADPAELKAIFLKYASIEKNGEFFMSPHDFVTRYLNIFGESQPNPKTVELLSGVVDQTKDGLISFQEFVAFESVLCAPDALFMVAFQLFDKAGKGEVTFEDVKQIFGQTTIHQHIPFNWDSEFVQLHFGKERKRHLTYAEFTQFLLEIQLEHAKQAFVQRDNAKTGKVSAIDFRDIMVTIRPHVLTPFVEECLVAAAGGTRSHQVSFSYFNGFNSLLNNMELIRKIYSTLAGNRKDVEVTKEEFALAAQKFGQVTPMEVDILFQLADLYEPRGRMTLADIERIAPLEEGMLPFNLAEAQRQQKASGDAARPFLLQLAESAYRFGLGSIAGAVGATAVYPIDLVKTRMQNQRSTGSFVGELMYKNSFDCFKKVLRYEGFFGLYRGLLPQLLGVAPEKAIKLTVNDFVRDKFMHKDGSVPLLAEIFAGGCAGGSQVIFTNPLEIVKIRLQVAGEITTGPRVSALSVVRDLGFFGIYKGAKACFLRDIPFSAIYFPCYAHVKASFANEDGQVSPGSLLLAGAIAGMPAASLVTPADVIKTRLQVAARAGQTTYNGVTDCFRKILREEGPKALWKGVAARVFRSSPQFGVTLLTYELLQRWFYVDFGGVKPVGSEPVPKSRITLPAPNPDHVGGYKLAVATFAGIENKFGLYLPLFKPSASTSKVTAGDS.

Alanine 2 bears the N-acetylalanine mark. The regulatory N-terminal domain stretch occupies residues 2-295 (AAAKVALTKR…TLADIERIAP (294 aa)). Residues 2 to 332 (AAAKVALTKR…LLQLAESAYR (331 aa)) lie on the Mitochondrial intermembrane side of the membrane. Lysine 18 bears the N6-acetyllysine mark. EF-hand domains lie at 51 to 86 (SQPN…SVLC), 87 to 122 (APDA…TTIH), 123 to 157 (QHIP…FLLE), and 158 to 193 (IQLE…IRPH). Ca(2+) contacts are provided by aspartate 66, threonine 68, aspartate 70, leucine 72, and glutamate 77. Residues 296–311 (LEEGMLPFNLAEAQRQ) form a linker loop domain region. Residues 322–613 (FLLQLAESAY…LQRWFYVDFG (292 aa)) are carrier domain. Solcar repeat units follow at residues 327–419 (AESA…VRDK), 427–511 (VPLL…VKAS), and 519–607 (VSPG…LQRW). A helical transmembrane segment spans residues 333 to 350 (FGLGSIAGAVGATAVYPI). At 351–393 (DLVKTRMQNQRSTGSFVGELMYKNSFDCFKKVLRYEGFFGLYR) the chain is on the mitochondrial matrix side. An N6-acetyllysine mark is found at lysine 354 and lysine 373. The helical transmembrane segment at 394–413 (GLLPQLLGVAPEKAIKLTVN) threads the bilayer. The Mitochondrial intermembrane segment spans residues 414–436 (DFVRDKFMHKDGSVPLLAEIFAG). A helical membrane pass occupies residues 437-450 (GCAGGSQVIFTNPL). Over 451-485 (EIVKIRLQVAGEITTGPRVSALSVVRDLGFFGIYK) the chain is Mitochondrial matrix. Lysine 454 carries the post-translational modification N6-methyllysine. Residue lysine 485 is modified to N6-acetyllysine; alternate. Lysine 485 carries the N6-succinyllysine; alternate modification. The helical transmembrane segment at 486-505 (GAKACFLRDIPFSAIYFPCY) threads the bilayer. Residues 506-524 (AHVKASFANEDGQVSPGSL) lie on the Mitochondrial intermembrane side of the membrane. A helical transmembrane segment spans residues 525-542 (LLAGAIAGMPAASLVTPA). The Mitochondrial matrix segment spans residues 543–581 (DVIKTRLQVAARAGQTTYNGVTDCFRKILREEGPKALWK). An N6-succinyllysine modification is found at lysine 581. Residues 582–601 (GVAARVFRSSPQFGVTLLTY) traverse the membrane as a helical segment. Topologically, residues 602 to 676 (ELLQRWFYVD…STSKVTAGDS (75 aa)) are mitochondrial intermembrane. The interval 614-676 (GVKPVGSEPV…STSKVTAGDS (63 aa)) is C-terminal domain. At lysine 663 the chain carries N6-acetyllysine. Phosphoserine is present on serine 667.

The protein belongs to the mitochondrial carrier (TC 2.A.29) family. As to quaternary structure, homodimer (via N-terminus). As to expression, at 10.5 dpc, expressed in branchial arches, a well as in the limb and tail buds. At 13.5 dpc expression is predominant in epithelial structures and the forebrain, kidney and liver. Expression in liver is maintained into adulthood.

Its subcellular location is the mitochondrion inner membrane. It catalyses the reaction L-aspartate(in) + L-glutamate(out) + H(+)(out) = L-aspartate(out) + L-glutamate(in) + H(+)(in). The catalysed reaction is 3-sulfino-L-alanine(out) + L-glutamate(in) + H(+)(in) = 3-sulfino-L-alanine(in) + L-glutamate(out) + H(+)(out). The enzyme catalyses 3-sulfino-L-alanine(out) + L-aspartate(in) = 3-sulfino-L-alanine(in) + L-aspartate(out). In terms of biological role, mitochondrial electrogenic aspartate/glutamate antiporter that favors efflux of aspartate and entry of glutamate and proton within the mitochondria as part of the malate-aspartate shuttle. Also mediates the uptake of L-cysteinesulfinate (3-sulfino-L-alanine) by mitochondria in exchange of L-glutamate and proton. Can also exchange L-cysteinesulfinate with aspartate in their anionic form without any proton translocation. Lacks transport activity towards gamma-aminobutyric acid (GABA). The protein is Electrogenic aspartate/glutamate antiporter SLC25A13, mitochondrial of Mus musculus (Mouse).